The primary structure comprises 147 residues: 3-dehydroquinate dehydratase (147 aa).

The active-site Proton acceptor is the Tyr-23. Asn-74, His-80, and Asp-87 together coordinate substrate. His-100 serves as the catalytic Proton donor. Substrate-binding positions include 101 to 102 (LS) and Arg-111.

The protein belongs to the type-II 3-dehydroquinase family. In terms of assembly, homododecamer.

The catalysed reaction is 3-dehydroquinate = 3-dehydroshikimate + H2O. It participates in metabolic intermediate biosynthesis; chorismate biosynthesis; chorismate from D-erythrose 4-phosphate and phosphoenolpyruvate: step 3/7. In terms of biological role, catalyzes a trans-dehydration via an enolate intermediate. This Clostridium botulinum (strain 657 / Type Ba4) protein is 3-dehydroquinate dehydratase.